The chain runs to 422 residues: UDP-N-acetylglucosamine 1-carboxyvinyltransferase (422 aa).

23–24 (KN) is a phosphoenolpyruvate binding site. Arg92 contributes to the UDP-N-acetyl-alpha-D-glucosamine binding site. The active-site Proton donor is the Cys116. A 2-(S-cysteinyl)pyruvic acid O-phosphothioketal modification is found at Cys116. UDP-N-acetyl-alpha-D-glucosamine-binding positions include 121-125 (RPVDL), 161-164 (KVSV), Asp306, and Ile328.

This sequence belongs to the EPSP synthase family. MurA subfamily.

It is found in the cytoplasm. It catalyses the reaction phosphoenolpyruvate + UDP-N-acetyl-alpha-D-glucosamine = UDP-N-acetyl-3-O-(1-carboxyvinyl)-alpha-D-glucosamine + phosphate. The protein operates within cell wall biogenesis; peptidoglycan biosynthesis. Functionally, cell wall formation. Adds enolpyruvyl to UDP-N-acetylglucosamine. The chain is UDP-N-acetylglucosamine 1-carboxyvinyltransferase from Aliivibrio fischeri (strain ATCC 700601 / ES114) (Vibrio fischeri).